The following is a 255-amino-acid chain: MSIKVIVAGFKGRMGSTAVDMIKNDSELELAALLDPFAAEKEIDGVPVFTDKSDLVGLDAEVWVDFTIPKVAYENTHFALENGFRPVVGTTGFTQEQIADLMTLSADKKLGGLIAPNFAIGAVLLMEFAAKASKYFPDLEIIELHHDKKKDAPSGTAVKTAELIREARAYKKQGAADEEETLVGARGAEFDGFRIHSVRLPGLVAHQEVIFGAQGEGLTLRHDSYDRISFMSGVNLGIKEVVQREQLVYGLEHLL.

NAD(+)-binding positions include 9-14, 89-91, and 115-118; these read GFKGRM, GTT, and APNF. Catalysis depends on His145, which acts as the Proton donor/acceptor. His146 is a (S)-2,3,4,5-tetrahydrodipicolinate binding site. Lys149 serves as the catalytic Proton donor. (S)-2,3,4,5-tetrahydrodipicolinate is bound at residue 155–156; it reads GT.

This sequence belongs to the DapB family.

It localises to the cytoplasm. It carries out the reaction (S)-2,3,4,5-tetrahydrodipicolinate + NAD(+) + H2O = (2S,4S)-4-hydroxy-2,3,4,5-tetrahydrodipicolinate + NADH + H(+). It catalyses the reaction (S)-2,3,4,5-tetrahydrodipicolinate + NADP(+) + H2O = (2S,4S)-4-hydroxy-2,3,4,5-tetrahydrodipicolinate + NADPH + H(+). It functions in the pathway amino-acid biosynthesis; L-lysine biosynthesis via DAP pathway; (S)-tetrahydrodipicolinate from L-aspartate: step 4/4. Functionally, catalyzes the conversion of 4-hydroxy-tetrahydrodipicolinate (HTPA) to tetrahydrodipicolinate. This Streptococcus mutans serotype c (strain ATCC 700610 / UA159) protein is 4-hydroxy-tetrahydrodipicolinate reductase.